The following is a 343-amino-acid chain: NADH-quinone oxidoreductase subunit H (343 aa).

Transmembrane regions (helical) follow at residues 19–39 (VAWTLVKIMALVVPLMLGVAY), 89–109 (ALFILGPILAIAPALAAWAVI), 124–144 (LLYVMAITSMGVYGVIIAGWA), 158–178 (AAQIVSYEIAMGFALVGVLMA), 198–218 (WYLWPLFPLFVVYLVAGVAET), 257–277 (ILVAALTTLMFLGGWLSPVAF), 279–299 (PDGIVWWLLKTGFVLFLFLWF), and 314–334 (LGWKVFIPITIVWIVFVGGMM).

This sequence belongs to the complex I subunit 1 family. As to quaternary structure, NDH-1 is composed of 14 different subunits. Subunits NuoA, H, J, K, L, M, N constitute the membrane sector of the complex.

The protein resides in the cell inner membrane. The enzyme catalyses a quinone + NADH + 5 H(+)(in) = a quinol + NAD(+) + 4 H(+)(out). Functionally, NDH-1 shuttles electrons from NADH, via FMN and iron-sulfur (Fe-S) centers, to quinones in the respiratory chain. The immediate electron acceptor for the enzyme in this species is believed to be ubiquinone. Couples the redox reaction to proton translocation (for every two electrons transferred, four hydrogen ions are translocated across the cytoplasmic membrane), and thus conserves the redox energy in a proton gradient. This subunit may bind ubiquinone. This chain is NADH-quinone oxidoreductase subunit H, found in Thiobacillus denitrificans (strain ATCC 25259 / T1).